The chain runs to 321 residues: tRNA 2-thiolation protein NcsA (321 aa).

Residue Lys-204 forms a Glycyl lysine isopeptide (Lys-Gly) (interchain with G-Cter in SAMP2) linkage.

Belongs to the TtcA family. CTU1/NCS6/ATPBD3 subfamily. Interacts with monomeric and polymeric forms of SAMP2. Interacts with UbaA. Interacts with archaeal EF-1-alpha and Pan1. Non-sampylated protein forms a complex with archaeal CPSF1 of approximately 100 kDa. In terms of processing, sampylated at Lys-204 with the archaeal ubiquitin-like protein SAMP2. Polymeric chains of SAMP2 are also linked.

It functions in the pathway tRNA modification; 5-methoxycarbonylmethyl-2-thiouridine-tRNA biosynthesis. Its function is as follows. Required for thiolation of mcm(5)S(2)U at the wobble uridine position of tRNA specific for lysine (tRNA(Lys)). Probably acts by catalyzing adenylation of tRNA, an intermediate required for 2-thiolation. May also act as a sulfurtransferase that transfers sulfur from thiocarboxylated SAMP2 onto the uridine of tRNA at wobble position. Required for cell growth at elevated temperatures. The polypeptide is tRNA 2-thiolation protein NcsA (Haloferax volcanii (strain ATCC 29605 / DSM 3757 / JCM 8879 / NBRC 14742 / NCIMB 2012 / VKM B-1768 / DS2) (Halobacterium volcanii)).